Consider the following 406-residue polypeptide: MSGCPFSGNSVGYTLKNLSMEDNEEDGAQTGVNRASKGGLIYGDYLQLEKILNAQELQSEIKGNKIHDEHLFIITHQAYELWFKQILWELDSVREIFQNGHVRDERNMLKVMTRMHRVVVIFKLLVQQFSVLETMTALDFNDFREYLSPASGFQSLQFRLLENKIGVLQSLRVPYNRKHYRDNFEGDYNELLLKSEQEQTLLQLVEAWLERTPGLEPHGFNFWGKFEKNILKGLEEEFLKIQAKKDSEEKEEQMAEFRKQKEVLLCLFDEKRHDYLLSKGERRLSYRALQGALMIYFYREEPRFQVPFQLLTSLMDIDTLMTKWRYNHVCMVHRMLGSKAGTGGSSGYYYLRSTVSDRYKVFVDLFNLSSYLVPRHWIPKMNPIIHKFLYTAEYSDSSYFSSDESD.

Serine 19 bears the Phosphoserine mark. Residues 72-76 (FIITH) and arginine 144 contribute to the substrate site. Histidine 328 lines the heme pocket. A substrate-binding site is contributed by threonine 342.

Belongs to the tryptophan 2,3-dioxygenase family. As to quaternary structure, homotetramer. Dimer of dimers. Heme serves as cofactor. As to expression, liver.

It carries out the reaction L-tryptophan + O2 = N-formyl-L-kynurenine. The protein operates within amino-acid degradation; L-tryptophan degradation via kynurenine pathway; L-kynurenine from L-tryptophan: step 1/2. In terms of biological role, heme-dependent dioxygenase that catalyzes the oxidative cleavage of the L-tryptophan (L-Trp) pyrrole ring and converts L-tryptophan to N-formyl-L-kynurenine. Catalyzes the oxidative cleavage of the indole moiety. This chain is Tryptophan 2,3-dioxygenase, found in Rattus norvegicus (Rat).